A 377-amino-acid chain; its full sequence is Chaperone protein DnaJ (377 aa).

Positions 5–70 (DYYQILGIPK…EKRSAYDQYG (66 aa)) constitute a J domain. A CR-type zinc finger spans residues 132-210 (GIKKEIQIPT…CHGQGRVETY (79 aa)). Positions 145, 148, 162, 165, 184, 187, 198, and 201 each coordinate Zn(2+). CXXCXGXG motif repeat units follow at residues 145-152 (CKTCYGSG), 162-169 (CSTCHGKG), 184-191 (CPTCHGKG), and 198-205 (CNLCHGQG).

Belongs to the DnaJ family. As to quaternary structure, homodimer. Zn(2+) is required as a cofactor.

The protein resides in the cytoplasm. Its function is as follows. Participates actively in the response to hyperosmotic and heat shock by preventing the aggregation of stress-denatured proteins and by disaggregating proteins, also in an autonomous, DnaK-independent fashion. Unfolded proteins bind initially to DnaJ; upon interaction with the DnaJ-bound protein, DnaK hydrolyzes its bound ATP, resulting in the formation of a stable complex. GrpE releases ADP from DnaK; ATP binding to DnaK triggers the release of the substrate protein, thus completing the reaction cycle. Several rounds of ATP-dependent interactions between DnaJ, DnaK and GrpE are required for fully efficient folding. Also involved, together with DnaK and GrpE, in the DNA replication of plasmids through activation of initiation proteins. The polypeptide is Chaperone protein DnaJ (Buchnera aphidicola subsp. Acyrthosiphon pisum (strain Tuc7)).